The primary structure comprises 327 residues: Tartrate-resistant acid phosphatase type 5 (327 aa).

A signal peptide spans 1 to 22; that stretch reads MDTWMVLLGLQILLLPLLAHCT. Residues aspartate 35, aspartate 73, tyrosine 76, and asparagine 112 each coordinate Fe cation. N-linked (GlcNAc...) asparagine glycosylation is found at asparagine 118 and asparagine 149. The cysteines at positions 163 and 221 are disulfide-linked. Positions 207, 242, and 244 each coordinate Fe cation.

In terms of assembly, exists either as monomer or, after proteolytic processing, as a dimer of two chains linked by disulfide bond(s). It depends on Fe cation as a cofactor. In terms of tissue distribution, characteristic constituent of osteoclasts and some mononuclear preosteoclasts. Preferentially expressed in skeletal tissues.

The protein localises to the lysosome. The enzyme catalyses a phosphate monoester + H2O = an alcohol + phosphate. May play a role in the process of bone resorption. The osteoclastic trap acts on nucleotide tri- and diphosphates with higher affinity, compared with other substrates. The protein is Tartrate-resistant acid phosphatase type 5 (Acp5) of Rattus norvegicus (Rat).